A 664-amino-acid polypeptide reads, in one-letter code: Glycine--tRNA ligase beta subunit (664 aa).

The protein belongs to the class-II aminoacyl-tRNA synthetase family. Tetramer of two alpha and two beta subunits.

The protein resides in the cytoplasm. The catalysed reaction is tRNA(Gly) + glycine + ATP = glycyl-tRNA(Gly) + AMP + diphosphate. This Rickettsia peacockii (strain Rustic) protein is Glycine--tRNA ligase beta subunit.